The sequence spans 548 residues: Chaperonin GroEL (548 aa).

Residues 30–33 (TLGP), Lys51, 87–91 (DGTTT), Gly415, 479–481 (NAA), and Asp495 each bind ATP.

Belongs to the chaperonin (HSP60) family. As to quaternary structure, forms a cylinder of 14 subunits composed of two heptameric rings stacked back-to-back. Interacts with the co-chaperonin GroES.

The protein localises to the cytoplasm. The catalysed reaction is ATP + H2O + a folded polypeptide = ADP + phosphate + an unfolded polypeptide.. In terms of biological role, together with its co-chaperonin GroES, plays an essential role in assisting protein folding. The GroEL-GroES system forms a nano-cage that allows encapsulation of the non-native substrate proteins and provides a physical environment optimized to promote and accelerate protein folding. This chain is Chaperonin GroEL, found in Ectopseudomonas mendocina (strain ymp) (Pseudomonas mendocina).